We begin with the raw amino-acid sequence, 53 residues long: UPF0391 membrane protein Bmul_5473/BMULJ_06024 (53 aa).

Helical transmembrane passes span A5–A25 and I30–V50.

The protein belongs to the UPF0391 family.

Its subcellular location is the cell membrane. This chain is UPF0391 membrane protein Bmul_5473/BMULJ_06024, found in Burkholderia multivorans (strain ATCC 17616 / 249).